Consider the following 283-residue polypeptide: Gap junction beta-1 protein (283 aa).

The Cytoplasmic portion of the chain corresponds to 1 to 22 (MNWTGLYTLLSGVNRHSTAIGR). Residues 23-45 (VWLSVIFIFRIMVLVVAAESVWG) traverse the membrane as a helical segment. Residues 46-75 (DEKSSFICNTLQPGCNSVCYDQFFPISHVR) lie on the Extracellular side of the membrane. The helical transmembrane segment at 76–95 (LWSLQLILVSTPALLVAMHV) threads the bilayer. Residues 96 to 130 (AHQQHIEKKMLRLEGHGDPLHLEEVKRHKVHISGT) lie on the Cytoplasmic side of the membrane. A helical transmembrane segment spans residues 131-153 (LWWTYVISVVFRLLFEAVFMYVF). Residues 154 to 191 (YLLYPGYAMVRLVKCDVYPCPNTVDCFVSRPTEKTVFT) lie on the Extracellular side of the membrane. A helical membrane pass occupies residues 192–214 (VFMLAASGICIILNVAEVVYLII). Topologically, residues 215-283 (RACARRAQRR…AEKSDRCSAC (69 aa)) are cytoplasmic. 4 positions are modified to phosphoserine: Ser233, Ser258, Ser266, and Ser277.

The protein belongs to the connexin family. Beta-type (group I) subfamily. A connexon is composed of a hexamer of connexins. Interacts with CNST.

It localises to the cell membrane. The protein localises to the cell junction. The protein resides in the gap junction. Its function is as follows. One gap junction consists of a cluster of closely packed pairs of transmembrane channels, the connexons, through which materials of low MW diffuse from one cell to a neighboring cell. This is Gap junction beta-1 protein (GJB1) from Homo sapiens (Human).